We begin with the raw amino-acid sequence, 85 residues long: Large ribosomal subunit protein bL27 (85 aa).

Residues 1–21 (MAHKKAGGSTRNGRDSESKRL) form a disordered region.

This sequence belongs to the bacterial ribosomal protein bL27 family.

The protein is Large ribosomal subunit protein bL27 of Pseudomonas entomophila (strain L48).